The chain runs to 223 residues: MNLQRLSIFGTDNIGVYIYTNNKYTVVPRGLDSETKENIVQILGTELIEAEISRSFLLGIFISGNDNGILLPKSTIDDEFRFLKENLRDCRVEVLNSKVTALGNTILTNNKAALIYPEFNDIEEKIIKETLGVEEIRRGKIAQMITVGSVGVVTNKGGLVHVDTSEKELKELEKLFGVKIDIGTVNFGSVFIRSGLVANDKGTLVGASTTGPEILRIQKALGE.

It belongs to the eIF-6 family.

Its function is as follows. Binds to the 50S ribosomal subunit and prevents its association with the 30S ribosomal subunit to form the 70S initiation complex. In Saccharolobus islandicus (strain M.16.27) (Sulfolobus islandicus), this protein is Translation initiation factor 6.